The primary structure comprises 458 residues: BTB/POZ domain-containing protein At5g41330 (458 aa).

One can recognise a BTB domain in the interval 11–72 (NVVSINVGGR…LRTGNLPARS (62 aa)). 3 WD repeats span residues 259–305 (DSAI…MVWE), 360–399 (LNER…LVGN), and 421–458 (SGEN…GISI).

Its pathway is protein modification; protein ubiquitination. In terms of biological role, may act as a substrate-specific adapter of an E3 ubiquitin-protein ligase complex (CUL3-RBX1-BTB) which mediates the ubiquitination and subsequent proteasomal degradation of target proteins. The polypeptide is BTB/POZ domain-containing protein At5g41330 (Arabidopsis thaliana (Mouse-ear cress)).